The following is a 623-amino-acid chain: Quinoprotein ethanol dehydrogenase (623 aa).

The signal sequence occupies residues 1-34 (MTIRSLPAALSPLSMAVQAVLLVSSLALAPAANA). Ca(2+) is bound by residues D45 and N51. E95 is a pyrroloquinoline quinone binding site. Residues C139 and C140 are joined by a disulfide bond. Residues R145, T189, and 207–209 (HGS) contribute to the pyrroloquinoline quinone site. E213 contacts Ca(2+). The segment at 242–279 (GRLNGKDSTPTGDVKAPSWPDDPTTETGKVESWSHGGG) is disordered. Ca(2+) is bound by residues N300 and D350. The active-site Proton acceptor is D350. R378 is a binding site for pyrroloquinoline quinone. A disordered region spans residues 414–436 (RPVENEGQRPAKPLPGETKGKPV). WD repeat units lie at residues 515-556 (EHNE…ELWK) and 559-601 (TGSG…LTKP). Residues W523 and A587 each contribute to the pyrroloquinoline quinone site.

This sequence belongs to the bacterial PQQ dehydrogenase family. As to quaternary structure, homodimer. The cofactor is pyrroloquinoline quinone. Ca(2+) is required as a cofactor.

It is found in the periplasm. The enzyme catalyses a primary alcohol + 2 Fe(III)-[cytochrome c] = an aldehyde + 2 Fe(II)-[cytochrome c] + 2 H(+). It carries out the reaction ethanol + 2 Fe(III)-[cytochrome c] = acetaldehyde + 2 Fe(II)-[cytochrome c] + 2 H(+). It catalyses the reaction ethanol + A = acetaldehyde + AH2. The catalysed reaction is 1-propanol + 2 Fe(III)-[cytochrome c] = propanal + 2 Fe(II)-[cytochrome c] + 2 H(+). It functions in the pathway alcohol metabolism; ethanol degradation; acetate from ethanol: step 1/2. Enhanced by the presence of ethylamine or NH4(+) ions. Catalyzes the oxidation of ethanol and other primary alcohols to the corresponding aldehydes, except methanol, which is not a substrate. Uses a specific inducible cytochrome c550, encoded by the adjacent gene in the locus, as electron acceptor. Is a key enzyme of the carbon and energy metabolism during growth of P.putida on ethanol as the sole carbon and energy source. Displays lower activity on secondary alcohols, aldehydes and diols. Is not active with sugar alcohols such as glycerol and D-sorbitol. In vitro, reacts well with phenazine methosulfate (PMS) as an electron acceptor but not with NAD(P), potassium ferricyanide, or molecular oxygen. The sequence is that of Quinoprotein ethanol dehydrogenase from Pseudomonas putida (Arthrobacter siderocapsulatus).